The sequence spans 84 residues: UPF0473 protein CLD_2004 (84 aa).

This sequence belongs to the UPF0473 family.

This chain is UPF0473 protein CLD_2004, found in Clostridium botulinum (strain Okra / Type B1).